The primary structure comprises 289 residues: Rhodopsin (289 aa).

Over 1–7 (YLVNPAG) the chain is Extracellular. A helical membrane pass occupies residues 8–32 (YAALGAYMFLLILIGSPVNFLTLYV). Residues 33 to 44 (TLEHKKLRTPLN) are Cytoplasmic-facing. The helical transmembrane segment at 45–67 (YILLNLAVADLFMVLGGFTTTMY) threads the bilayer. Residues 68 to 81 (TSMHGYSVLGRLGC) are Extracellular-facing. Cysteines 81 and 158 form a disulfide. Residues 82-104 (ILEGFFATLGGEIALWSLVVLAI) form a helical membrane-spanning segment. A 'Ionic lock' involved in activated form stabilization motif is present at residues 105–107 (ERW). Residues 105 to 123 (ERWIVVCKPISNFRFTEDH) are Cytoplasmic-facing. Residues 124–144 (AIMGLAFSWVMALACAVPPLV) form a helical membrane-spanning segment. Residues 145-173 (GWSRYIPEGMQCSCGVDYYTRAEGFNNES) lie on the Extracellular side of the membrane. Asparagine 171 carries an N-linked (GlcNAc...) asparagine glycan. A helical transmembrane segment spans residues 174–195 (FVIYMFIVHFLIPLSVIFFCYG). Over 196-223 (RLLCAVKEAAAAQQESETTQRPEKEVTR) the chain is Cytoplasmic. The chain crosses the membrane as a helical span at residues 224-245 (MVVIMVIAFLVCCLPNASVAWW). At 246 to 257 (IFCNQGSDFGPI) the chain is on the extracellular side. A helical membrane pass occupies residues 258-279 (FMTLPSFFAKSAAIYNPMIYIC). Lysine 267 carries the N6-(retinylidene)lysine modification. The Cytoplasmic portion of the chain corresponds to 280-289 (MNKQFRHCMI).

This sequence belongs to the G-protein coupled receptor 1 family. Opsin subfamily. Post-translationally, phosphorylated on some or all of the serine and threonine residues present in the C-terminal region. In terms of processing, contains one covalently linked retinal chromophore.

The protein localises to the membrane. The protein resides in the cell projection. It is found in the cilium. Its subcellular location is the photoreceptor outer segment. In terms of biological role, photoreceptor required for image-forming vision at low light intensity. While most salt water fish species use retinal as chromophore, most freshwater fish use 3-dehydroretinal, or a mixture of retinal and 3-dehydroretinal. Light-induced isomerization of 11-cis to all-trans retinal triggers a conformational change that activates signaling via G-proteins. Subsequent receptor phosphorylation mediates displacement of the bound G-protein alpha subunit by arrestin and terminates signaling. This Limnocottus bergianus protein is Rhodopsin (rho).